Consider the following 473-residue polypeptide: FAD-dependent oxidoreductase dpasF (473 aa).

Residues 1 to 21 form the signal peptide; sequence MNRLLASALLVGSAVVAPVSA. Residues N26, N54, N92, N133, N185, N276, and N401 are each glycosylated (N-linked (GlcNAc...) asparagine).

It belongs to the beta-cyclopiazonate dehydrogenase family. The cofactor is FAD.

It functions in the pathway secondary metabolite biosynthesis; terpenoid biosynthesis. FAD-dependent oxidoreductase; part of the gene cluster that mediates the biosynthesis of the diterpenoid pyrones subglutinols A and B. The first step of the pathway is the synthesis of the alpha-pyrone moiety by the polyketide synthase dpasA via condensation of one acetyl-CoA starter unit with 3 malonyl-CoA units and 2 methylations. The alpha-pyrone is then combined with geranylgeranyl pyrophosphate (GGPP) formed by the GGPP synthase dpasD through the action of the prenyltransferase dpasC to yield a linear alpha-pyrone diterpenoid. Subsequent steps in the diterpenoid pyrone biosynthetic pathway involve the decalin core formation, which is initiated by the epoxidation of the C10-C11 olefin by the FAD-dependent oxidoreductase dpasE, and is followed by a cyclization cascade catalyzed by the terpene cyclase dpasB. The FAD-linked oxidoreductase dpasF is then involved in tetrahydrofuran (THF) ring formation at the C5 unit to complete the formation of subglutinols A and B. DpasF possesses also an additional catalytic ability of multi-step oxidations to generate a new DDP analog with an enone system at the C5 named FDDP A. The chain is FAD-dependent oxidoreductase dpasF from Apiospora sacchari (Arthrinium sacchari).